A 340-amino-acid polypeptide reads, in one-letter code: Very-long-chain 3-oxoacyl-CoA reductase (340 aa).

Residues 23–43 traverse the membrane as a helical segment; the sequence is LQYTFAALGALYVLRGALSFV. The NADP(+) site is built by Val68, Arg109, Asp123, Asp131, Asn150, Lys185, Tyr217, Lys221, Val250, and Thr252. Residue Tyr217 is the Proton donor of the active site. Residue Lys221 is the Lowers pKa of active site Tyr of the active site.

It belongs to the short-chain dehydrogenases/reductases (SDR) family.

The protein resides in the endoplasmic reticulum membrane. The enzyme catalyses a very-long-chain (3R)-3-hydroxyacyl-CoA + NADP(+) = a very-long-chain 3-oxoacyl-CoA + NADPH + H(+). It functions in the pathway lipid metabolism; fatty acid biosynthesis. In terms of biological role, component of the microsomal membrane bound fatty acid elongation system, which produces the 26-carbon very long-chain fatty acids (VLCFA) from palmitate. Catalyzes the reduction of the 3-ketoacyl-CoA intermediate that is formed in each cycle of fatty acid elongation. VLCFAs serve as precursors for ceramide and sphingolipids. The sequence is that of Very-long-chain 3-oxoacyl-CoA reductase from Podospora anserina (strain S / ATCC MYA-4624 / DSM 980 / FGSC 10383) (Pleurage anserina).